We begin with the raw amino-acid sequence, 245 residues long: Phosducin (245 aa).

A compositionally biased stretch (acidic residues) spans 1 to 14; that stretch reads MEEAKSQSLEEDFE. The segment at 1-68 is disordered; the sequence is MEEAKSQSLE…RDNKDSKERF (68 aa). The Phosducin domain occupies 1–241; that stretch reads MEEAKSQSLE…THALDQTNME (241 aa). Residues 59–68 show a composition bias toward basic and acidic residues; sequence RDNKDSKERF. A Phosphoserine; by PKA modification is found at Ser73. Positions 111–245 are thioredoxin fold; the sequence is YGFVYELETG…DQTNMEEDIE (135 aa).

It belongs to the phosducin family. Interacts with CRX. Forms a complex with the beta and gamma subunits of the GTP-binding protein, transducin. Post-translationally, light-induced changes in cyclic nucleotide levels modulate the phosphorylation of this protein by cAMP kinase.

It localises to the cytoplasm. The protein localises to the cytosol. It is found in the nucleus. Its subcellular location is the cell projection. The protein resides in the cilium. It localises to the photoreceptor outer segment. The protein localises to the photoreceptor inner segment. Functionally, inhibits the transcriptional activation activity of the cone-rod homeobox CRX. May participate in the regulation of visual phototransduction or in the integration of photoreceptor metabolism. In Felis catus (Cat), this protein is Phosducin (PDC).